Reading from the N-terminus, the 687-residue chain is Guanine-nucleotide exchange factor YEL1 (687 aa).

A compositionally biased stretch (polar residues) spans 14–27; sequence YGVSQKGYNDNFSE. Disordered stretches follow at residues 14 to 35 and 63 to 97; these read YGVS…LHGS and AAND…TDQN. In terms of domain architecture, SEC7 spans 57-264; the sequence is ILQNKEAAND…SEYYKTLNET (208 aa). A compositionally biased stretch (low complexity) spans 73-83; sequence TTDTATAGTGT. At threonine 290 the chain carries Phosphothreonine. Phosphoserine is present on residues serine 293 and serine 299. In terms of domain architecture, PH spans 412–551; the sequence is ASRRTSLSYL…DCINFWAGRI (140 aa).

It belongs to the YEL1 family.

The protein resides in the cytoplasm. Its subcellular location is the cell membrane. It localises to the bud neck. It is found in the bud tip. Functionally, guanine nucleotide exchange factor for ARF3 required for localization of ARF3 to the bud neck and tip and involved in actin patch polarization. The polypeptide is Guanine-nucleotide exchange factor YEL1 (YEL1) (Saccharomyces cerevisiae (strain RM11-1a) (Baker's yeast)).